A 29-amino-acid polypeptide reads, in one-letter code: Alpha-amylase inhibitor 2 (29 aa).

The protein belongs to the protease inhibitor I6 (cereal trypsin/alpha-amylase inhibitor) family.

The protein resides in the secreted. In terms of biological role, alpha-amylase inhibitor. In Saussurea costus (Costus), this protein is Alpha-amylase inhibitor 2.